A 258-amino-acid polypeptide reads, in one-letter code: Proteasome subunit alpha (258 aa).

This sequence belongs to the peptidase T1A family. In terms of assembly, the 20S proteasome core is composed of 14 alpha and 14 beta subunits that assemble into four stacked heptameric rings, resulting in a barrel-shaped structure. The two inner rings, each composed of seven catalytic beta subunits, are sandwiched by two outer rings, each composed of seven alpha subunits. The catalytic chamber with the active sites is on the inside of the barrel. Has a gated structure, the ends of the cylinder being occluded by the N-termini of the alpha-subunits. Is capped at one or both ends by the proteasome regulatory ATPase, PAN.

It is found in the cytoplasm. With respect to regulation, the formation of the proteasomal ATPase PAN-20S proteasome complex, via the docking of the C-termini of PAN into the intersubunit pockets in the alpha-rings, triggers opening of the gate for substrate entry. Interconversion between the open-gate and close-gate conformations leads to a dynamic regulation of the 20S proteasome proteolysis activity. Component of the proteasome core, a large protease complex with broad specificity involved in protein degradation. The sequence is that of Proteasome subunit alpha from Aeropyrum pernix (strain ATCC 700893 / DSM 11879 / JCM 9820 / NBRC 100138 / K1).